Here is a 131-residue protein sequence, read N- to C-terminus: Phosphoribosyl-AMP cyclohydrolase (131 aa).

A Mg(2+)-binding site is contributed by Asp-74. Cys-75 contributes to the Zn(2+) binding site. Residues Asp-76 and Asp-78 each coordinate Mg(2+). Zn(2+) is bound by residues Cys-91 and Cys-98.

This sequence belongs to the PRA-CH family. In terms of assembly, homodimer. The cofactor is Mg(2+). Zn(2+) serves as cofactor.

The protein resides in the cytoplasm. The enzyme catalyses 1-(5-phospho-beta-D-ribosyl)-5'-AMP + H2O = 1-(5-phospho-beta-D-ribosyl)-5-[(5-phospho-beta-D-ribosylamino)methylideneamino]imidazole-4-carboxamide. It functions in the pathway amino-acid biosynthesis; L-histidine biosynthesis; L-histidine from 5-phospho-alpha-D-ribose 1-diphosphate: step 3/9. Catalyzes the hydrolysis of the adenine ring of phosphoribosyl-AMP. The protein is Phosphoribosyl-AMP cyclohydrolase of Bradyrhizobium sp. (strain BTAi1 / ATCC BAA-1182).